Reading from the N-terminus, the 353-residue chain is Peroxidase 34 (353 aa).

The N-terminal stretch at 1-30 is a signal peptide; the sequence is MHFSSSSTSSTWTILITLGCLMLHASLSAA. Glutamine 31 is modified (pyrrolidone carboxylic acid). 4 disulfides stabilise this stretch: cysteine 41–cysteine 121, cysteine 74–cysteine 79, cysteine 127–cysteine 331, and cysteine 207–cysteine 239. Asparagine 43 is a glycosylation site (N-linked (GlcNAc...) asparagine). Histidine 72 functions as the Proton acceptor in the catalytic mechanism. Aspartate 73, valine 76, glycine 78, aspartate 80, and serine 82 together coordinate Ca(2+). An N-linked (GlcNAc...) asparagine glycan is attached at asparagine 87. A substrate-binding site is contributed by proline 169. Histidine 200 is a heme b binding site. Threonine 201 contacts Ca(2+). N-linked (GlcNAc...) asparagine glycosylation is found at asparagine 216, asparagine 228, and asparagine 244. The Ca(2+) site is built by aspartate 252, threonine 255, and aspartate 260. N-linked (GlcNAc...) asparagine glycosylation is present at asparagine 285.

Belongs to the peroxidase family. Classical plant (class III) peroxidase subfamily. Heme b serves as cofactor. Requires Ca(2+) as cofactor. In terms of tissue distribution, preferentially expressed in roots, but also detected in flowers, leaves and stems.

It localises to the secreted. Its subcellular location is the vacuole. The enzyme catalyses 2 a phenolic donor + H2O2 = 2 a phenolic radical donor + 2 H2O. Functionally, removal of H(2)O(2), oxidation of toxic reductants, biosynthesis and degradation of lignin, suberization, auxin catabolism, response to environmental stresses such as wounding, pathogen attack and oxidative stress. These functions might be dependent on each isozyme/isoform in each plant tissue. In terms of biological role, may be implicated in the systemic acquired resistance response via the salicylic acid signal transduction pathway. Exhibits a Ca(2+)-pectate binding affinity which could be interpreted in vivo as a specificity to interact with the pectic structure of the cell wall. The chain is Peroxidase 34 (PER34) from Arabidopsis thaliana (Mouse-ear cress).